We begin with the raw amino-acid sequence, 720 residues long: MVWRRRWWRRRRRPVWRRRYRRWRRRRRWRRRPRRRRRPYRRRPYRRYGRRRKVRRRRRRTLVVRQFQPPYQRRCRVSGLEPLLYFGKKEEERHFYGNRQIMKDVDQTEGGGVTDGVFSLEELYESYQEGWNHWSASNQMLPLVRYFGCKITLYRSATDSYIFWWTNRPPFQVDRQFWVGMHPYWMLRRGRKVVMLSKQLKPFAKDHVTIKIGPPALMKTKWYFARDFCKTWLLQWRACFFNPIDPYIPRGANNTTVTFYGFPGHSYPSQSLYYTWQEHLAETNVWGITNESEKTKFEALRKAWNEQATKGPVAGYKAVLQAMNAWASVAAPGPEGSNFAKGTNVALGLANLLWLIYSQYYWQNRSPSPWGLPGATLEAMKHPEAWKPYAYKYSWSHDKGKGNRFAICDWPYKDQHGEQTTPLNFDLEIKDAPLWWCVTAAYDWAIRQGKNPANWSFFVRSDYTWPRADNIILAYSSYFADNVVKNKYADPQHATGGYFTLYRAPNLIDGREAIDIIYRNGPFAPKQEESTGNATIKYRFYFKWGGTQRPPRPQPTDPCQQPRWEGPNFPPFDGRARIDNPSDQDPRSYFWPFDTRRGSLTASAVDRVKRSLDAVTEPSETRLREGEETYGLPPPEKRARWGFPSILPTENPTDEDERYLEAEADTSSSDATDGVPETPFELLQHIQRDRDKRRELRGRLARLILRLRRRQDPELQNYYP.

Disordered stretches follow at residues 546 to 569 and 616 to 691; these read GTQR…GPNF and TEPS…RDRD. Residues 652–664 are compositionally biased toward acidic residues; it reads PTDEDERYLEAEA.

It belongs to the anelloviridae capsid protein family.

The protein resides in the virion. In terms of biological role, self-assembles to form an icosahedral capsid with a T=1 symmetry, about 30 nm in diameter, and consisting of 60 capsid proteins. The capsid encapsulates the genomic DNA. Capsid protein is involved in attachment and entry into the host cell. The protein is Capsid protein of Torque teno douroucouli virus (isolate At-TTV3).